The primary structure comprises 127 residues: Modulator protein MzrA (127 aa).

Residues M1 to R10 lie on the Cytoplasmic side of the membrane. Residues L11–L31 traverse the membrane as a helical segment. Residues Q32 to G127 are Periplasmic-facing.

It belongs to the MzrA family. In terms of assembly, interacts with EnvZ.

The protein resides in the cell inner membrane. Its function is as follows. Modulates the activity of the EnvZ/OmpR two-component regulatory system, probably by directly modulating EnvZ enzymatic activity and increasing stability of phosphorylated OmpR. In Enterobacter sp. (strain 638), this protein is Modulator protein MzrA.